The sequence spans 187 residues: Large ribosomal subunit protein uL5 (187 aa).

The protein belongs to the universal ribosomal protein uL5 family. In terms of assembly, part of the 50S ribosomal subunit; part of the 5S rRNA/L5/L18/L25 subcomplex. Contacts the 5S rRNA and the P site tRNA. Forms a bridge to the 30S subunit in the 70S ribosome.

Its function is as follows. This is one of the proteins that bind and probably mediate the attachment of the 5S RNA into the large ribosomal subunit, where it forms part of the central protuberance. In the 70S ribosome it contacts protein S13 of the 30S subunit (bridge B1b), connecting the 2 subunits; this bridge is implicated in subunit movement. Contacts the P site tRNA; the 5S rRNA and some of its associated proteins might help stabilize positioning of ribosome-bound tRNAs. This chain is Large ribosomal subunit protein uL5, found in Saccharopolyspora erythraea (strain ATCC 11635 / DSM 40517 / JCM 4748 / NBRC 13426 / NCIMB 8594 / NRRL 2338).